The chain runs to 336 residues: Transmembrane protein 120A (336 aa).

The Cytoplasmic portion of the chain corresponds to 1 to 131 (MNSPALQDCV…KQSKFAYKDE (131 aa)). Lys129 is a CoA binding site. Residues 132–151 (YEKFKLYLTMILMVLSFICR) traverse the membrane as a helical segment. Over 152–157 (FVLNSR) the chain is Extracellular. The chain crosses the membrane as a helical span at residues 158–176 (VTDAVFNFLLVWYYCTLTI). Over 177–189 (RESILINNGSRIK) the chain is Cytoplasmic. Residues Ser186 and Arg187 each contribute to the CoA site. Residues 190–208 (GWWVLNHYISTFLSGVMLT) traverse the membrane as a helical segment. At 209 to 217 (WPDGLMYQM) the chain is on the extracellular side. Residues 218–239 (FRNQFLSFSMYQSFVQFLQYYY) form a helical membrane-spanning segment. The CoA site is built by Gln236, Tyr239, and Gln240. Topologically, residues 240 to 269 (QSGCLYRLRALGERHNMDLTVEGFQSWMWR) are cytoplasmic. Residues 270–293 (GLTFLLPFLFFGQFWQLYNAITLF) traverse the membrane as a helical segment. The Extracellular portion of the chain corresponds to 294-303 (KLARHPECKE). The chain crosses the membrane as a helical span at residues 304–329 (WQVIMCGLPFLVHFLGNFFTTLRVVH). The Cytoplasmic segment spans residues 330 to 336 (QKFQKQN). Lys331 provides a ligand contact to CoA.

It belongs to the TMEM120 family. As to quaternary structure, homodimer.

The protein localises to the cell membrane. It is found in the nucleus inner membrane. Its subcellular location is the endoplasmic reticulum. Its function is as follows. Multifunctional protein involved in mechanosensation, and plays an essential role in lipid metabolism. May function as a potential ion channel involved in sensing mechanical stimuli. TMEM120A is structurally similar to a lipid-modifying enzyme, ELOVL7, and contains a bound coenzyme A molecule, which suggests it might function as an enzyme in lipid metabolism. The polypeptide is Transmembrane protein 120A (Xenopus tropicalis (Western clawed frog)).